The following is a 462-amino-acid chain: MTATFKKEVNLVFECETGNYHTFCPISCVAWLYQKIEDSFFLVIGTKTCGYFLQNALGVMIFAEPRYAMAELEEGDISAQLNDYKELKRLCLQIKQDRNPSVIVWIGTCTTEIIKMDLEGMAPRLESEIDIPIVVARANGLDYAFTQGEDTVLAAMVNRCPKKDQLTKPLQAVSFIDTDSLQKEKGPKYDSINHDKDLVLFGSLPSTVVTQLNLELQRQDIKVSGWLPSQRYSDLPILDSGVYVCGVNPFLSRTAATLMRRRKCKLIGAPFPIGPDGTRAWVEKICSVFGKQPQGLEQREAEIWKGLEDYLQLVRGKSVFFMGDNLLEVSLARFLIRCGMIVYEIGIPYMDKRFQAAELAFLEKTCHDMNVPMPRIVEKPDNYNQIQRIKELQPDLAITGMAHANPLEARGISTKWSVEFTFAQIHGFTNSRDILELVTRPLRRNNSLEGSLGWTQLVKSTV.

[4Fe-4S] cluster contacts are provided by Cys-24, Cys-49, and Cys-109.

It belongs to the BchN/ChlN family. As to quaternary structure, protochlorophyllide reductase is composed of three subunits; ChlL, ChlN and ChlB. Forms a heterotetramer of two ChlB and two ChlN subunits. [4Fe-4S] cluster serves as cofactor.

The protein localises to the plastid. Its subcellular location is the chloroplast. The catalysed reaction is chlorophyllide a + oxidized 2[4Fe-4S]-[ferredoxin] + 2 ADP + 2 phosphate = protochlorophyllide a + reduced 2[4Fe-4S]-[ferredoxin] + 2 ATP + 2 H2O. It functions in the pathway porphyrin-containing compound metabolism; chlorophyll biosynthesis (light-independent). Functionally, component of the dark-operative protochlorophyllide reductase (DPOR) that uses Mg-ATP and reduced ferredoxin to reduce ring D of protochlorophyllide (Pchlide) to form chlorophyllide a (Chlide). This reaction is light-independent. The NB-protein (ChlN-ChlB) is the catalytic component of the complex. The chain is Light-independent protochlorophyllide reductase subunit N from Pleurastrum terricola (Filamentous green alga).